The chain runs to 80 residues: Exodeoxyribonuclease 7 small subunit (80 aa).

This sequence belongs to the XseB family. In terms of assembly, heterooligomer composed of large and small subunits.

Its subcellular location is the cytoplasm. It catalyses the reaction Exonucleolytic cleavage in either 5'- to 3'- or 3'- to 5'-direction to yield nucleoside 5'-phosphates.. Bidirectionally degrades single-stranded DNA into large acid-insoluble oligonucleotides, which are then degraded further into small acid-soluble oligonucleotides. In Marinomonas sp. (strain MWYL1), this protein is Exodeoxyribonuclease 7 small subunit.